A 221-amino-acid polypeptide reads, in one-letter code: Thiamine-phosphate synthase (221 aa).

4-amino-2-methyl-5-(diphosphooxymethyl)pyrimidine is bound by residues 41–45 (QLRDK) and Asn-82. Residues Asp-83 and Asp-102 each contribute to the Mg(2+) site. 4-amino-2-methyl-5-(diphosphooxymethyl)pyrimidine is bound at residue Ser-120. 146–148 (TPT) provides a ligand contact to 2-[(2R,5Z)-2-carboxy-4-methylthiazol-5(2H)-ylidene]ethyl phosphate. A 4-amino-2-methyl-5-(diphosphooxymethyl)pyrimidine-binding site is contributed by Lys-149. 2-[(2R,5Z)-2-carboxy-4-methylthiazol-5(2H)-ylidene]ethyl phosphate is bound at residue Gly-177.

It belongs to the thiamine-phosphate synthase family. The cofactor is Mg(2+).

It catalyses the reaction 2-[(2R,5Z)-2-carboxy-4-methylthiazol-5(2H)-ylidene]ethyl phosphate + 4-amino-2-methyl-5-(diphosphooxymethyl)pyrimidine + 2 H(+) = thiamine phosphate + CO2 + diphosphate. It carries out the reaction 2-(2-carboxy-4-methylthiazol-5-yl)ethyl phosphate + 4-amino-2-methyl-5-(diphosphooxymethyl)pyrimidine + 2 H(+) = thiamine phosphate + CO2 + diphosphate. The enzyme catalyses 4-methyl-5-(2-phosphooxyethyl)-thiazole + 4-amino-2-methyl-5-(diphosphooxymethyl)pyrimidine + H(+) = thiamine phosphate + diphosphate. Its pathway is cofactor biosynthesis; thiamine diphosphate biosynthesis; thiamine phosphate from 4-amino-2-methyl-5-diphosphomethylpyrimidine and 4-methyl-5-(2-phosphoethyl)-thiazole: step 1/1. Its function is as follows. Condenses 4-methyl-5-(beta-hydroxyethyl)thiazole monophosphate (THZ-P) and 2-methyl-4-amino-5-hydroxymethyl pyrimidine pyrophosphate (HMP-PP) to form thiamine monophosphate (TMP). In Mycolicibacterium vanbaalenii (strain DSM 7251 / JCM 13017 / BCRC 16820 / KCTC 9966 / NRRL B-24157 / PYR-1) (Mycobacterium vanbaalenii), this protein is Thiamine-phosphate synthase.